Consider the following 191-residue polypeptide: Large ribosomal subunit protein uL5 (191 aa).

The protein belongs to the universal ribosomal protein uL5 family. Part of the 50S ribosomal subunit; part of the 5S rRNA/L5/L18/L25 subcomplex. Contacts the 5S rRNA and the P site tRNA. Forms a bridge to the 30S subunit in the 70S ribosome.

In terms of biological role, this is one of the proteins that bind and probably mediate the attachment of the 5S RNA into the large ribosomal subunit, where it forms part of the central protuberance. In the 70S ribosome it contacts protein S13 of the 30S subunit (bridge B1b), connecting the 2 subunits; this bridge is implicated in subunit movement. Contacts the P site tRNA; the 5S rRNA and some of its associated proteins might help stabilize positioning of ribosome-bound tRNAs. The chain is Large ribosomal subunit protein uL5 from Salinibacter ruber (strain DSM 13855 / M31).